The primary structure comprises 207 residues: 8-oxoguanine DNA glycosylase/AP lyase (207 aa).

Catalysis depends on residues K128 and D146.

The protein belongs to the type-2 OGG1 family.

The enzyme catalyses 2'-deoxyribonucleotide-(2'-deoxyribose 5'-phosphate)-2'-deoxyribonucleotide-DNA = a 3'-end 2'-deoxyribonucleotide-(2,3-dehydro-2,3-deoxyribose 5'-phosphate)-DNA + a 5'-end 5'-phospho-2'-deoxyribonucleoside-DNA + H(+). In terms of biological role, catalyzes the excision of an oxidatively damaged form of guanine (7,8-dihydro-8-oxoguanine = 8-oxoG) from DNA. Also cleaves the DNA backbone at apurinic/apyrimidinic sites (AP sites). The chain is 8-oxoguanine DNA glycosylase/AP lyase from Saccharolobus solfataricus (strain ATCC 35092 / DSM 1617 / JCM 11322 / P2) (Sulfolobus solfataricus).